The sequence spans 397 residues: MKEKVVLAYSGGLDTSIIIPWLKENYDLDVIAVCVNVGQGDDMDYVKTKAIKSGASKIYVEDVKEEFVVDYLYKAIKSEALYEQDYMLGTSFARPLMAKKLVEIAHKEQAKYICHGCTGKGNDQVRFEVGVKAQDPTIKIIAPWRIWDIKSREDAIDYAKKVGVEVPVTKKKIYSVDKNLWHVSHEGGDLEDLKNEHKEDMYFMVTPPEKAKDEPTYLEIYFEKGAPVKINGEFLNPVDIIDKLNTIGGENGIGIADIIENRLVGMKSRGIYETPAGTLLYAAHKKLESVTLDKYTYQYKKLVSAQYGELVYNGLWFTALREAIDAFVDKTQENVTGTVKLKLYKGNIKPCSVDTEYALYDEGISSFGESELYSHKDAEGFINLFGLPCKIKALKNF.

8–16 lines the ATP pocket; it reads AYSGGLDTS. Residues Tyr-86 and Ser-91 each contribute to the L-citrulline site. An ATP-binding site is contributed by Gly-116. L-aspartate contacts are provided by Thr-118, Asn-122, and Asp-123. Asn-122 is a binding site for L-citrulline. L-citrulline contacts are provided by Arg-126, Ser-175, Ser-184, Glu-260, and Tyr-272.

It belongs to the argininosuccinate synthase family. Type 1 subfamily. Homotetramer.

It localises to the cytoplasm. The enzyme catalyses L-citrulline + L-aspartate + ATP = 2-(N(omega)-L-arginino)succinate + AMP + diphosphate + H(+). It participates in amino-acid biosynthesis; L-arginine biosynthesis; L-arginine from L-ornithine and carbamoyl phosphate: step 2/3. The polypeptide is Argininosuccinate synthase (Clostridium botulinum (strain 657 / Type Ba4)).